A 412-amino-acid chain; its full sequence is Lipoyl synthase, mitochondrial (412 aa).

Residues 1–28 (MASIAPSLKRAHAPLRKALTASSTIRAF) constitute a mitochondrion transit peptide. Residues Cys-124, Cys-129, Cys-135, Cys-155, Cys-159, Cys-162, and Ser-372 each coordinate [4Fe-4S] cluster. One can recognise a Radical SAM core domain in the interval 138–361 (GSDKNAATAT…NKRALDMGFL (224 aa)).

Belongs to the radical SAM superfamily. Lipoyl synthase family. Requires [4Fe-4S] cluster as cofactor.

It is found in the mitochondrion. It carries out the reaction [[Fe-S] cluster scaffold protein carrying a second [4Fe-4S](2+) cluster] + N(6)-octanoyl-L-lysyl-[protein] + 2 oxidized [2Fe-2S]-[ferredoxin] + 2 S-adenosyl-L-methionine + 4 H(+) = [[Fe-S] cluster scaffold protein] + N(6)-[(R)-dihydrolipoyl]-L-lysyl-[protein] + 4 Fe(3+) + 2 hydrogen sulfide + 2 5'-deoxyadenosine + 2 L-methionine + 2 reduced [2Fe-2S]-[ferredoxin]. It functions in the pathway protein modification; protein lipoylation via endogenous pathway; protein N(6)-(lipoyl)lysine from octanoyl-[acyl-carrier-protein]: step 2/2. In terms of biological role, catalyzes the radical-mediated insertion of two sulfur atoms into the C-6 and C-8 positions of the octanoyl moiety bound to the lipoyl domains of lipoate-dependent enzymes, thereby converting the octanoylated domains into lipoylated derivatives. This is Lipoyl synthase, mitochondrial from Fusarium vanettenii (strain ATCC MYA-4622 / CBS 123669 / FGSC 9596 / NRRL 45880 / 77-13-4) (Fusarium solani subsp. pisi).